Here is a 314-residue protein sequence, read N- to C-terminus: Acetaldehyde dehydrogenase (314 aa).

Ser-15–Ile-18 contacts NAD(+). Cys-133 serves as the catalytic Acyl-thioester intermediate. NAD(+) contacts are provided by residues Ser-164–Asn-172 and Asn-292.

Belongs to the acetaldehyde dehydrogenase family.

It catalyses the reaction acetaldehyde + NAD(+) + CoA = acetyl-CoA + NADH + H(+). In Paraburkholderia phytofirmans (strain DSM 17436 / LMG 22146 / PsJN) (Burkholderia phytofirmans), this protein is Acetaldehyde dehydrogenase.